Consider the following 681-residue polypeptide: Potassium-transporting ATPase ATP-binding subunit (681 aa).

4 helical membrane-spanning segments follow: residues 30-50 (LLVYVGAILATSLYFLGFFGI), 59-79 (LAIALILWFTVLFANFAEAIA), 216-236 (ILLVTLSIIFLAVSATLLPFT), and 255-275 (IALLVCLAPTTIGALLSSIGI). Asp-306 acts as the 4-aspartylphosphate intermediate in catalysis. ATP contacts are provided by residues Asp-343, Glu-347, 376–383 (FTATTRMS), and Lys-394. The Mg(2+) site is built by Asp-517 and Asp-521. 3 helical membrane passes run 587-607 (FAIIPVLFYGIFPQLEALNLM), 615-635 (AILSAIIYNAVIIIVLIPLSL), and 661-681 (LIAPFIAIKLIDMLLTVLGIV).

The protein belongs to the cation transport ATPase (P-type) (TC 3.A.3) family. Type IA subfamily. In terms of assembly, the system is composed of three essential subunits: KdpA, KdpB and KdpC.

The protein resides in the cell membrane. It carries out the reaction K(+)(out) + ATP + H2O = K(+)(in) + ADP + phosphate + H(+). In terms of biological role, part of the high-affinity ATP-driven potassium transport (or Kdp) system, which catalyzes the hydrolysis of ATP coupled with the electrogenic transport of potassium into the cytoplasm. This subunit is responsible for energy coupling to the transport system and for the release of the potassium ions to the cytoplasm. The protein is Potassium-transporting ATPase ATP-binding subunit of Listeria monocytogenes serovar 1/2a (strain ATCC BAA-679 / EGD-e).